The primary structure comprises 111 residues: Large ribosomal subunit protein bL20c (111 aa).

Belongs to the bacterial ribosomal protein bL20 family.

It is found in the plastid. It localises to the chloroplast. Functionally, binds directly to 23S ribosomal RNA and is necessary for the in vitro assembly process of the 50S ribosomal subunit. It is not involved in the protein synthesizing functions of that subunit. The protein is Large ribosomal subunit protein bL20c of Ostreococcus tauri.